The primary structure comprises 282 residues: Protoheme IX farnesyltransferase (282 aa).

The next 9 membrane-spanning stretches (helical) occupy residues 9 to 29 (LAKPGIIFGNLITLTGGFLLA), 39 to 59 (LPLFVYVMIGVALMIAAGCVF), 79 to 99 (LVTGDISVIQATIYGTILLIL), 102 to 122 (LVLYYLVNLLTLWIIIIGFIV), 139 to 159 (VLGGISGAIPPVAGYTAVVNI), 165 to 185 (LALFLILFFWQIPHSYAIAML), 210 to 230 (IMLFYLALFVVSCALPAVLGS), 231 to 251 (ADLFSFIVCMLVALFWMYKSI), and 261 to 281 (VFAKTVFKFSIIVITAICLTM).

Belongs to the UbiA prenyltransferase family. Protoheme IX farnesyltransferase subfamily.

The protein localises to the cell inner membrane. The catalysed reaction is heme b + (2E,6E)-farnesyl diphosphate + H2O = Fe(II)-heme o + diphosphate. It functions in the pathway porphyrin-containing compound metabolism; heme O biosynthesis; heme O from protoheme: step 1/1. Converts heme B (protoheme IX) to heme O by substitution of the vinyl group on carbon 2 of heme B porphyrin ring with a hydroxyethyl farnesyl side group. The chain is Protoheme IX farnesyltransferase from Francisella tularensis subsp. holarctica (strain LVS).